The primary structure comprises 93 residues: Small ribosomal subunit protein uS19 (93 aa).

Belongs to the universal ribosomal protein uS19 family.

Functionally, protein S19 forms a complex with S13 that binds strongly to the 16S ribosomal RNA. In Leptospira borgpetersenii serovar Hardjo-bovis (strain JB197), this protein is Small ribosomal subunit protein uS19.